A 158-amino-acid chain; its full sequence is MRTFSLKAGEIDKRWVLIDASDMVVGRLAAYIATILRGKHKPEYTPHMDCGDNVVVVNASSVKFTRNKMRDKVYYRHTGYPGGLKSCTPNDMLRAGYAERIIKVAVWRMLGDGPLARRRFKNLKVYSGPEHGHHAQKPVALDFGAMNNKNGRGNNAGR.

The segment at 129 to 158 (PEHGHHAQKPVALDFGAMNNKNGRGNNAGR) is disordered. Residues 144–158 (GAMNNKNGRGNNAGR) are compositionally biased toward low complexity.

Belongs to the universal ribosomal protein uL13 family. In terms of assembly, part of the 50S ribosomal subunit.

In terms of biological role, this protein is one of the early assembly proteins of the 50S ribosomal subunit, although it is not seen to bind rRNA by itself. It is important during the early stages of 50S assembly. In Anaplasma phagocytophilum (strain HZ), this protein is Large ribosomal subunit protein uL13.